A 317-amino-acid chain; its full sequence is Putative 12-oxophytodienoate reductase 10 (317 aa).

26–28 contacts FMN; that stretch reads PVG. Residue 117–120 participates in substrate binding; sequence HGAN. Y122 functions as the Proton donor in the catalytic mechanism. Position 169 (R169) interacts with FMN. Position 209 (R209) interacts with substrate. FMN-binding positions include G244 and 265–266; that span reads GR.

It belongs to the NADH:flavin oxidoreductase/NADH oxidase family. FMN serves as cofactor.

In terms of biological role, putative oxophytodienoate reductase that may be involved in the biosynthesis or metabolism of oxylipin signaling molecules. The polypeptide is Putative 12-oxophytodienoate reductase 10 (OPR10) (Oryza sativa subsp. japonica (Rice)).